The following is a 318-amino-acid chain: NAC domain-containing protein 59 (318 aa).

Residues 24–174 (LPPGFRFHPT…ECVISRVFHT (151 aa)) enclose the NAC domain. The DNA-binding element occupies 121-180 (VGMKKTLVFYKGRAPKGVKTNWVMHEYRLEGKFAIDNLSKTAKNECVISRVFHTRTDGTK).

Mostly expressed in root cortex, phloem, atrichoblast and quiescent center (QC), and, to a lower extent, in root endodermis, xylem, pericycle, columella and lateral root cap (LRC). Expressed in roots, cotyledons, very young leaves, senescing leaves, mature flowers and pollen.

The protein resides in the nucleus. Functionally, transcription activator that binds to DNA in promoters of target genes on a specific bipartite motif 5'-[AG]CGT[AG](4-5n)[AG][CT]ACGCAA-3'. Triggers the expression of senescence-associated genes during age-, salt- and dark-induced senescence through a regulatory network that may involve cross-talk with salt- and H(2)O(2)-dependent signaling pathways. In Arabidopsis thaliana (Mouse-ear cress), this protein is NAC domain-containing protein 59.